We begin with the raw amino-acid sequence, 159 residues long: 2-C-methyl-D-erythritol 2,4-cyclodiphosphate synthase (159 aa).

Positions 8 and 10 each coordinate a divalent metal cation. Residues 8-10 (DVH) and 34-35 (HS) contribute to the 4-CDP-2-C-methyl-D-erythritol 2-phosphate site. A divalent metal cation is bound at residue His42. 4-CDP-2-C-methyl-D-erythritol 2-phosphate contacts are provided by residues 56-58 (DIG), 61-65 (FPDTD), 100-106 (AQEPKMA), 132-135 (TTTE), Phe139, and Arg142.

Belongs to the IspF family. Homotrimer. A divalent metal cation is required as a cofactor.

It carries out the reaction 4-CDP-2-C-methyl-D-erythritol 2-phosphate = 2-C-methyl-D-erythritol 2,4-cyclic diphosphate + CMP. It participates in isoprenoid biosynthesis; isopentenyl diphosphate biosynthesis via DXP pathway; isopentenyl diphosphate from 1-deoxy-D-xylulose 5-phosphate: step 4/6. Involved in the biosynthesis of isopentenyl diphosphate (IPP) and dimethylallyl diphosphate (DMAPP), two major building blocks of isoprenoid compounds. Catalyzes the conversion of 4-diphosphocytidyl-2-C-methyl-D-erythritol 2-phosphate (CDP-ME2P) to 2-C-methyl-D-erythritol 2,4-cyclodiphosphate (ME-CPP) with a corresponding release of cytidine 5-monophosphate (CMP). The protein is 2-C-methyl-D-erythritol 2,4-cyclodiphosphate synthase of Alkaliphilus metalliredigens (strain QYMF).